The following is a 445-amino-acid chain: MKPVIALVGRPNVGKSTLFNRLTRSRDALVADLPGLTRDRHYGEGRVGARPYLVVDTGGFEPVAKDGILHEMARQTRQAVEEADVVVFIVDGRNGLAPQDKSIADYLRKTGRPIFLVVNKAEGMKYTAVASDFYELGLGDPRAISAAHGDGVNDMINEALEVAYAGEPQESEEAAAARGIKIAIVGRPNVGKSTLVNTLIGEDRVIAFDMPGTTRDSIYVDFERNGKHYTLIDTAGLRRRGKVFEAIEKFSVVKTLQSISDANVVILLLDARQDISDQDAHIAGFVVEQGRALVVGVNKWDGLDPHVRERTKADLARKLKFLEFAKFHFISAAEKTGIGALMRSVDDAYAAAMKKLPTPKLTRALIEAVEFQQPRRRGPVRPKLRYAHQGGQNPPIIVIHGNALDAVTETYKRYLENRFRETFSLTGTPLRIEFRSSTNPYADKD.

2 EngA-type G domains span residues 3 to 167 (PVIA…YAGE) and 180 to 353 (IKIA…AAAM). Residues 9-16 (GRPNVGKS), 56-60 (DTGGF), 119-122 (NKAE), 186-193 (GRPNVGKS), 233-237 (DTAGL), and 298-301 (NKWD) contribute to the GTP site. A KH-like domain is found at 354–438 (KKLPTPKLTR…PLRIEFRSST (85 aa)).

It belongs to the TRAFAC class TrmE-Era-EngA-EngB-Septin-like GTPase superfamily. EngA (Der) GTPase family. Associates with the 50S ribosomal subunit.

Functionally, GTPase that plays an essential role in the late steps of ribosome biogenesis. This chain is GTPase Der, found in Burkholderia pseudomallei (strain 1106a).